The following is a 403-amino-acid chain: Semaphorin-like protein A39 (403 aa).

A signal peptide spans Met-1 to Gly-14. Residues Ile-15 to Met-403 enclose the Sema domain.

The protein belongs to the semaphorin family. Interacts with host VESPR.

It is found in the secreted. Its function is as follows. Acts as a semaphorin-like protein and binds to host plexin C1 receptor. May alter the movement of host plexin C1-expressing cells including dendritic cells, monocytes, or granulocytes in the proximity of infected cells. May also regulate host cell cytoskeleton of neighboring cells to improve viral infection. The sequence is that of Semaphorin-like protein A39 from Homo sapiens (Human).